Here is an 854-residue protein sequence, read N- to C-terminus: Protein translocase subunit SecA (854 aa).

Residues Q81, 99-103 (GEGKT), and D487 each bind ATP.

This sequence belongs to the SecA family. In terms of assembly, monomer and homodimer. Part of the essential Sec protein translocation apparatus which comprises SecA, SecYEG and auxiliary proteins SecDF. Other proteins may also be involved.

The protein localises to the cell membrane. It localises to the cytoplasm. It catalyses the reaction ATP + H2O + cellular proteinSide 1 = ADP + phosphate + cellular proteinSide 2.. Functionally, part of the Sec protein translocase complex. Interacts with the SecYEG preprotein conducting channel. Has a central role in coupling the hydrolysis of ATP to the transfer of proteins into and across the cell membrane, serving as an ATP-driven molecular motor driving the stepwise translocation of polypeptide chains across the membrane. In Mycoplasma mobile (strain ATCC 43663 / 163K / NCTC 11711) (Mesomycoplasma mobile), this protein is Protein translocase subunit SecA.